Reading from the N-terminus, the 335-residue chain is Beta-hexosaminidase (335 aa).

Substrate is bound by residues Asp60, Arg68, Arg133, and 163-164 (KH). The active-site Proton donor/acceptor is the His176. Asp247 functions as the Nucleophile in the catalytic mechanism.

It belongs to the glycosyl hydrolase 3 family. NagZ subfamily. Monomer.

The protein localises to the cytoplasm. The catalysed reaction is Hydrolysis of terminal non-reducing N-acetyl-D-hexosamine residues in N-acetyl-beta-D-hexosaminides.. Its pathway is cell wall biogenesis; peptidoglycan recycling. Functionally, plays a role in peptidoglycan recycling by cleaving the terminal beta-1,4-linked N-acetylglucosamine (GlcNAc) from peptide-linked peptidoglycan fragments, giving rise to free GlcNAc, anhydro-N-acetylmuramic acid and anhydro-N-acetylmuramic acid-linked peptides. In Xylella fastidiosa (strain 9a5c), this protein is Beta-hexosaminidase.